Consider the following 360-residue polypeptide: Phospho-N-acetylmuramoyl-pentapeptide-transferase (360 aa).

10 helical membrane passes run 21-41 (YITF…LWIG), 73-93 (TMGG…WADL), 98-118 (VWFV…DDYW), 132-152 (WKYF…YAVG), 168-188 (FMPQ…VGTS), 199-219 (GLAI…AWAT), 236-256 (AGEL…FLWY), 263-283 (VFMG…IAVL), 288-308 (LLLV…ILQV), and 338-358 (VIVC…VTLK).

This sequence belongs to the glycosyltransferase 4 family. MraY subfamily. Mg(2+) is required as a cofactor.

The protein localises to the cell inner membrane. The catalysed reaction is UDP-N-acetyl-alpha-D-muramoyl-L-alanyl-gamma-D-glutamyl-meso-2,6-diaminopimeloyl-D-alanyl-D-alanine + di-trans,octa-cis-undecaprenyl phosphate = di-trans,octa-cis-undecaprenyl diphospho-N-acetyl-alpha-D-muramoyl-L-alanyl-D-glutamyl-meso-2,6-diaminopimeloyl-D-alanyl-D-alanine + UMP. The protein operates within cell wall biogenesis; peptidoglycan biosynthesis. Catalyzes the initial step of the lipid cycle reactions in the biosynthesis of the cell wall peptidoglycan: transfers peptidoglycan precursor phospho-MurNAc-pentapeptide from UDP-MurNAc-pentapeptide onto the lipid carrier undecaprenyl phosphate, yielding undecaprenyl-pyrophosphoryl-MurNAc-pentapeptide, known as lipid I. The polypeptide is Phospho-N-acetylmuramoyl-pentapeptide-transferase (Actinobacillus pleuropneumoniae serotype 7 (strain AP76)).